The following is a 100-amino-acid chain: Large ribosomal subunit protein eL30 (100 aa).

Belongs to the eukaryotic ribosomal protein eL30 family.

This chain is Large ribosomal subunit protein eL30, found in Methanococcus maripaludis (strain DSM 14266 / JCM 13030 / NBRC 101832 / S2 / LL).